The sequence spans 512 residues: Podocan-like protein 1 (512 aa).

Positions 1–26 (MAESGLAMWPSLLLLLLLPGPPPVAG) are cleaved as a signal peptide. The region spanning 37-74 (ESLQPLPRACPLRCSCPRVDTVDCDGLDLRVFPDNITR) is the LRRNT domain. The N-linked (GlcNAc...) asparagine glycan is linked to asparagine 71. LRR repeat units follow at residues 75 to 96 (AAQH…ELSR), 99 to 119 (GLRT…PDEA), 125 to 146 (QLQH…LPRS), 147 to 167 (LRVA…TFGE), 170 to 193 (ALRS…AFRG), 196 to 216 (AIAT…SLPP), 217 to 238 (SLER…ALSR), 241 to 261 (QLRE…DATT), 267 to 288 (SLEY…LPRT), 289 to 309 (LAIL…RLHG), 312 to 332 (GLRY…PAGA), 338 to 359 (GLHT…LPRR), 360 to 380 (LRAL…DLVA), 383 to 396 (GLTE…RLAS), 409 to 430 (ALRS…LPTG), 431 to 451 (LRTL…PLAG), and 454 to 474 (QLRE…GPGT).

It belongs to the small leucine-rich proteoglycan (SLRP) family. SLRP class V subfamily. N-glycosylated.

It localises to the secreted. It is found in the extracellular space. The protein resides in the extracellular matrix. The chain is Podocan-like protein 1 (PODNL1) from Homo sapiens (Human).